Here is a 422-residue protein sequence, read N- to C-terminus: Probable D-serine dehydratase (422 aa).

At Lys-105 the chain carries N6-(pyridoxal phosphate)lysine.

It belongs to the serine/threonine dehydratase family. DsdA subfamily. Pyridoxal 5'-phosphate serves as cofactor.

The catalysed reaction is D-serine = pyruvate + NH4(+). The sequence is that of Probable D-serine dehydratase from Carboxydothermus hydrogenoformans (strain ATCC BAA-161 / DSM 6008 / Z-2901).